The sequence spans 432 residues: Adenylosuccinate synthetase (432 aa).

GTP contacts are provided by residues 13-19 (GDEGKGK) and 41-43 (GHT). The active-site Proton acceptor is Asp14. Mg(2+) contacts are provided by Asp14 and Gly41. Residues 14-17 (DEGK), 39-42 (NAGH), Thr131, Arg145, Gln226, Thr241, and Arg305 each bind IMP. His42 (proton donor) is an active-site residue. Position 301-307 (301-307 (SVTGRAR)) interacts with substrate. Residues Arg307, 333-335 (KLD), and 416-418 (STG) each bind GTP.

The protein belongs to the adenylosuccinate synthetase family. As to quaternary structure, homodimer. The cofactor is Mg(2+).

The protein localises to the cytoplasm. The catalysed reaction is IMP + L-aspartate + GTP = N(6)-(1,2-dicarboxyethyl)-AMP + GDP + phosphate + 2 H(+). The protein operates within purine metabolism; AMP biosynthesis via de novo pathway; AMP from IMP: step 1/2. Its function is as follows. Plays an important role in the de novo pathway of purine nucleotide biosynthesis. Catalyzes the first committed step in the biosynthesis of AMP from IMP. In Neisseria meningitidis serogroup B (strain ATCC BAA-335 / MC58), this protein is Adenylosuccinate synthetase.